Consider the following 144-residue polypeptide: Large ribosomal subunit protein uL15 (144 aa).

The tract at residues 1–51 (MQLNTLSPAQGEKKSRKRVGRGIGSGIGKTCGSGHKGQKSRSGGFNKIGFE) is disordered. Gly residues predominate over residues 21–35 (RGIGSGIGKTCGSGH).

The protein belongs to the universal ribosomal protein uL15 family. As to quaternary structure, part of the 50S ribosomal subunit.

Functionally, binds to the 23S rRNA. This is Large ribosomal subunit protein uL15 from Vesicomyosocius okutanii subsp. Calyptogena okutanii (strain HA).